Reading from the N-terminus, the 479-residue chain is MSILVKNNIHWVGQRDWEVRDFHGTEYKTLRGSSYNSYLIREEKNVLIDTVDHKFSREFVQNLRSEIDLADIDYIIINHAEEDHAGALTELMAQIPDTPIYCTANAIDSINGHHHHPEWNFKVVKTGDTLDIGDGKQLIFVETPMLHWPDSMMTYMTGDAVLFSNDAFGQHYCDEHLFNDEVDQTELFEQCQRYYANILTPFSRLVTPKITEILGFNLPVDMIATSHGVVWRDNPTQIVELYLKWAADYQEDRITIFYDTMSNNTRMMADAIAQGINEVDPNVAVKIFNVARSDKNEILTNVFRSKGVLVGTSTMNNVMMPKIAGLVEEMTGLRFRNKRASAFGSHGWSGGAVDRLSTRLQDAGFEMSLSLKAKWRPDLDALELCRQHGRDIARQWALAPLPETTQKTAPVEETTTCTAADLGPKMQCSVCQWIYDPALGEPLQDVAPGTPWSDVPDNFLCPECSLGKDVFDVLATEAK.

The zinc metallo-hydrolase stretch occupies residues 30–210 (LRGSSYNSYL…PFSRLVTPKI (181 aa)). Positions 79, 81, 83, 147, 166, and 227 each coordinate Fe cation. Residues 254 to 393 (ITIFYDTMSN…LCRQHGRDIA (140 aa)) form the Flavodoxin-like domain. FMN contacts are provided by residues 260–264 (TMSNN) and 342–369 (AFGS…EMSL). Residues 423-474 (GPKMQCSVCQWIYDPALGEPLQDVAPGTPWSDVPDNFLCPECSLGKDVFDVL) enclose the Rubredoxin-like domain. Cysteine 428, cysteine 431, cysteine 461, and cysteine 464 together coordinate Fe cation.

It in the N-terminal section; belongs to the zinc metallo-hydrolase group 3 family. In terms of assembly, homotetramer. Fe cation serves as cofactor. It depends on FMN as a cofactor.

The protein localises to the cytoplasm. It functions in the pathway nitrogen metabolism; nitric oxide reduction. In terms of biological role, anaerobic nitric oxide reductase; uses NADH to detoxify nitric oxide (NO), protecting several 4Fe-4S NO-sensitive enzymes. Has at least 2 reductase partners, only one of which (NorW, flavorubredoxin reductase) has been identified. NO probably binds to the di-iron center; electrons enter from the NorW at rubredoxin and are transferred sequentially to the FMN center and the di-iron center. Also able to function as an aerobic oxygen reductase. The protein is Anaerobic nitric oxide reductase flavorubredoxin of Salmonella typhi.